The chain runs to 207 residues: Ras-related protein Rab-7a (207 aa).

Thr-2 is modified (N-acetylthreonine). Residues Ser-17, Gly-18, Val-19, Gly-20, Lys-21, Thr-22, Ser-23, Ser-34, Asn-35, Tyr-37, and Thr-40 each contribute to the GTP site. Thr-22 provides a ligand contact to Mg(2+). The Switch 1 signature appears at 28-41 (YVNKKFSNQYKATI). Thr-40 and Asp-63 together coordinate Mg(2+). Gly-66 contributes to the GTP binding site. The Switch 2 motif lies at 67–82 (QERFQSLGVAFYRGAD). Ser-72 carries the phosphoserine modification. The GTP site is built by Asn-125, Lys-126, Asp-128, Ala-156, and Lys-157. Residues Lys-191 and Lys-194 each participate in a glycyl lysine isopeptide (Lys-Gly) (interchain with G-Cter in ubiquitin) cross-link. Residues Cys-205 and Cys-207 are each lipidated (S-geranylgeranyl cysteine). At Cys-207 the chain carries Cysteine methyl ester.

The protein belongs to the small GTPase superfamily. Rab family. Interacts with NTRK1/TRKA. Interacts with RILP. Interacts with PSMA7. Interacts with RNF115. Interacts with FYCO1. Interacts with the PIK3C3/VPS34-PIK3R4 complex. The GTP-bound form interacts with OSBPL1A. The GTP-bound form interacts with RAC1. Interacts with CLN3. Interacts with CHM, the substrate-binding subunit of the Rab geranylgeranyltransferase complex. Interacts with C9orf72. Does not interact with HPS4 and the BLOC-3 complex (heterodimer of HPS1 and HPS4). Interacts with CLN5. Interacts with PLEKHM1 (via N- and C-terminus). Interacts with PRPH; the interaction is direct. Interacts with VPS13A. The GDP-bound form interacts with RIMOC1. Interacts with the MON1A-CCZ1B complex and this interaction is enhanced in the presence of RIMOC1. Interacts with VPS39 and VPS41. Forms a ternary complex with LAMP2 and RUFY4; the interaction with LAMP2 is mediated by RUFY4 (via RUN and coiled coil domains). It depends on Mg(2+) as a cofactor. In terms of processing, deubiquitination at Lys-191 and Lys-194 by USP32. Post-translationally, phosphorylated at Ser-72 by LRRK1; phosphorylation is dependent on protein kinase C (PKC) activation of LRRK1. Prenylated. Prenylation is required for association with cellular membranes.

It is found in the cytoplasmic vesicle. Its subcellular location is the phagosome membrane. It localises to the late endosome membrane. The protein resides in the lysosome membrane. The protein localises to the melanosome membrane. It is found in the autophagosome membrane. Its subcellular location is the lipid droplet. It localises to the endosome membrane. The protein resides in the mitochondrion membrane. It carries out the reaction GTP + H2O = GDP + phosphate + H(+). Regulated by guanine nucleotide exchange factors (GEFs) which promote the exchange of bound GDP for free GTP. Regulated by GTPase activating proteins (GAPs) which increase the GTP hydrolysis activity. Inhibited by GDP dissociation inhibitors (GDIs). Its function is as follows. The small GTPases Rab are key regulators of intracellular membrane trafficking, from the formation of transport vesicles to their fusion with membranes. Rabs cycle between an inactive GDP-bound form and an active GTP-bound form that is able to recruit to membranes different sets of downstream effectors directly responsible for vesicle formation, movement, tethering and fusion. In its active state, RAB7A binds to a variety of effector proteins playing a key role in the regulation of endo-lysosomal trafficking. Governs early-to-late endosomal maturation, microtubule minus-end as well as plus-end directed endosomal migration and positioning, and endosome-lysosome transport through different protein-protein interaction cascades. Also plays a central role in growth-factor-mediated cell signaling, nutrient-transporter-mediated nutrient uptake, neurotrophin transport in the axons of neurons and lipid metabolism. Also involved in regulation of some specialized endosomal membrane trafficking, such as maturation of melanosomes, pathogen-induced phagosomes (or vacuoles) and autophagosomes. Plays a role in the maturation and acidification of phagosomes that engulf pathogens, such as S.aureus and Mycobacteria. Plays a role in the fusion of phagosomes with lysosomes. In concert with RAC1, plays a role in regulating the formation of RBs (ruffled borders) in osteoclasts. Controls the endosomal trafficking and neurite outgrowth signaling of NTRK1/TRKA. Regulates the endocytic trafficking of the EGF-EGFR complex by regulating its lysosomal degradation. Involved in the ADRB2-stimulated lipolysis through lipophagy, a cytosolic lipase-independent autophagic pathway. Required for the exosomal release of SDCBP, CD63 and syndecan. Required for vesicular trafficking and cell surface expression of ACE2. May play a role in PRPH neuronal intermediate filament assembly. The protein is Ras-related protein Rab-7a (RAB7A) of Canis lupus familiaris (Dog).